The following is an 859-amino-acid chain: Low-density lipoprotein receptor-related protein 12 (859 aa).

The first 32 residues, 1–32 (MARRWSTKESPRWRSALLLLFLAGVYGNGALA), serve as a signal peptide directing secretion. At 33–492 (EHSENVHISG…ENCPVIVPTR (460 aa)) the chain is on the extracellular side. Intrachain disulfides connect cysteine 47–cysteine 76 and cysteine 103–cysteine 122. A CUB 1 domain is found at 47–159 (CGETPEQIRA…KGFRLAYFSG (113 aa)). Asparagine 75 carries an N-linked (GlcNAc...) asparagine glycan. N-linked (GlcNAc...) asparagine glycosylation occurs at asparagine 146. LDL-receptor class A domains follow at residues 165–201 (NCACDQFRCGNGKCIPEAWKCNNMDECGDSSDEEICA) and 214–255 (PCAY…IDCD). 7 disulfide bridges follow: cysteine 166–cysteine 178, cysteine 173–cysteine 191, cysteine 185–cysteine 200, cysteine 215–cysteine 232, cysteine 222–cysteine 245, cysteine 239–cysteine 254, and cysteine 259–cysteine 285. Positions 259–372 (CGQWLKYFYG…RGFNATYQVD (114 aa)) constitute a CUB 2 domain. Asparagine 284 and asparagine 366 each carry an N-linked (GlcNAc...) asparagine glycan. LDL-receptor class A domains are found at residues 374 to 411 (FCLPWEIPCGGNWGCYTEQQRCDGYWHCPNGRDEINCT), 412 to 449 (MCQKEEFPCSRNGVCYPRSDRCNYQNHCPNGSDEKNCF), and 450 to 486 (FCQPGNFHCKNNRCVFESWVCDSQDDCGDGSDEENCP). Cystine bridges form between cysteine 375–cysteine 388, cysteine 382–cysteine 401, cysteine 395–cysteine 410, cysteine 413–cysteine 426, cysteine 420–cysteine 439, cysteine 433–cysteine 448, cysteine 451–cysteine 463, cysteine 458–cysteine 476, and cysteine 470–cysteine 485. Residue asparagine 409 is glycosylated (N-linked (GlcNAc...) asparagine). A glycan (N-linked (GlcNAc...) asparagine) is linked at asparagine 441. A helical transmembrane segment spans residues 493 to 513 (VITAAVIGSLICGLLLVIALG). Residues 514 to 859 (CTCKLYSLRM…TSDDEALLLC (346 aa)) lie on the Cytoplasmic side of the membrane. Disordered stretches follow at residues 623–678 (ADGD…LPQK), 693–723 (ASSSTQSTRGGHADNGRDVTSVEPPSVSPAR), 748–770 (SSVSQNQSPLRQLDNGVSGREDD), and 802–823 (QGQGLRQPYNATNPGVRPSNRD). Composition is skewed to polar residues over residues 748-757 (SSVSQNQSPL) and 802-814 (QGQGLRQPYNATN).

The protein belongs to the LDLR family. In terms of assembly, may interact with RACK1, ZFYVE9 and NMRK2.

It is found in the membrane. The protein localises to the coated pit. Its function is as follows. Probable receptor, which may be involved in the internalization of lipophilic molecules and/or signal transduction. May act as a tumor suppressor. This chain is Low-density lipoprotein receptor-related protein 12 (LRP12), found in Pongo abelii (Sumatran orangutan).